The primary structure comprises 186 residues: MAAWGKKHAGKDPVRDECEERNRFTETREEDVTDEHGEREPFAETDEHTGANTKKPEDTAEDLTAKRKRMKMDKTCSKTKNKSKHALRKKQLKRQKRDYIHSLKLLNVLEEYITDEQKEEEEEEGEEEELIRIFQEQQKKWQQYRSVRRERLKEMKLLRDQFVKALEDFEDLCDRVFSDEDSELDN.

The tract at residues 1 to 93 is disordered; the sequence is MAAWGKKHAG…KHALRKKQLK (93 aa). Basic and acidic residues-rich tracts occupy residues 10-27 and 34-58; these read GKDPVRDECEERNRFTET and DEHGEREPFAETDEHTGANTKKPED. The segment covering 66–93 has biased composition (basic residues); sequence KRKRMKMDKTCSKTKNKSKHALRKKQLK.

The protein belongs to the XLR/SYCP3 family. In terms of tissue distribution, expressed in testis and ovary (at protein level).

Its subcellular location is the nucleus. The protein resides in the cytoplasm. The protein localises to the chromosome. In terms of biological role, may play a role in meiosis. In Homo sapiens (Human), this protein is Protein FAM9B.